The following is an 837-amino-acid chain: Outer membrane usher protein HifC (837 aa).

Positions 1 to 26 are cleaved as a signal peptide; the sequence is MKTKIFPLNKIAFACSLLLANPLAWA. Residues C813 and C833 are joined by a disulfide bond.

This sequence belongs to the fimbrial export usher family.

It localises to the cell outer membrane. In terms of biological role, essential for piliation. In Haemophilus influenzae, this protein is Outer membrane usher protein HifC (hifC).